A 362-amino-acid chain; its full sequence is Probable S-adenosylmethionine-dependent methyltransferase At5g37970 (362 aa).

Positions 19, 66, 71, 107, 136, and 137 each coordinate S-adenosyl-L-homocysteine. Residues N175, E261, and F263 each contribute to the Mg(2+) site.

The protein belongs to the methyltransferase superfamily. Type-7 methyltransferase family. In terms of assembly, homodimer. Mg(2+) serves as cofactor.

The protein is Probable S-adenosylmethionine-dependent methyltransferase At5g37970 of Arabidopsis thaliana (Mouse-ear cress).